A 70-amino-acid polypeptide reads, in one-letter code: Small ribosomal subunit protein bS21 (70 aa).

Residues 43–70 are disordered; it reads TERKRKAAAAVKRQHKRLRSLTLPPKLY. The segment covering 45 to 61 has biased composition (basic residues); it reads RKRKAAAAVKRQHKRLR.

The protein belongs to the bacterial ribosomal protein bS21 family.

The protein is Small ribosomal subunit protein bS21 of Dechloromonas aromatica (strain RCB).